A 755-amino-acid polypeptide reads, in one-letter code: Cartilage oligomeric matrix protein (755 aa).

The first 19 residues, 1–19, serve as a signal peptide directing secretion; the sequence is MSPTACVLVLALAALRATG. The interval 21–84 is COMP N-terminal; sequence GQIPLGGDLA…PARTPGLSVR (64 aa). The 40-residue stretch at 85–124 folds into the EGF-like 1 domain; the sequence is PVALCAPGSCFPGVVCTETATGARCGPCPPGYTGNGSHCT. 21 cysteine pairs are disulfide-bonded: Cys-89–Cys-100, Cys-94–Cys-109, Cys-112–Cys-123, Cys-129–Cys-140, Cys-134–Cys-149, Cys-152–Cys-176, Cys-182–Cys-195, Cys-189–Cys-204, Cys-207–Cys-219, Cys-227–Cys-241, Cys-235–Cys-251, Cys-253–Cys-264, Cys-280–Cys-285, Cys-290–Cys-310, Cys-326–Cys-346, Cys-349–Cys-369, Cys-385–Cys-405, Cys-408–Cys-428, Cys-446–Cys-466, Cys-482–Cys-502, and Cys-518–Cys-739. Asn-119 carries an N-linked (GlcNAc...) asparagine glycan. The 53-residue stretch at 125-177 folds into the EGF-like 2; calcium-binding domain; the sequence is DVNECNAHPCFPRVRCINTSPGFHCEACPPGFSGPTHEGVGLTFAKTNKQVCT. The 43-residue stretch at 178–220 folds into the EGF-like 3; calcium-binding domain; sequence DINECETGQHNCVPNSVCVNTRGSFQCGPCQPGFVGDQRSGCQ. An EGF-like 4 domain is found at 223-265; sequence GQHFCPDGSPSPCHEKADCILERDGSRSCVCAVGWAGNGLLCG. 8 TSP type-3 repeats span residues 266–298, 299–334, 335–357, 358–393, 394–416, 417–454, 455–490, and 491–526; these read RDTD…NSGQ, EDVD…NPDQ, RNSD…NDDQ, KDTD…NFDQ, SDSD…NPDQ, RDVD…NSAQ, QDSD…NPGQ, and EDND…EVTL. A disordered region spans residues 295–501; the sequence is NSGQEDVDRD…DNDRDGVGDA (207 aa). Composition is skewed to basic and acidic residues over residues 332-344 and 350-365; these read PDQR…KWGD and RSQK…RDGQ. Ser-394 is modified (phosphoserine). Composition is skewed to basic and acidic residues over residues 412–424 and 456–465; these read DNPD…HDFV and DSDHDGKGDA. The segment at 525 to 755 is mediates cell survival and induction of the IAP family of survival proteins; that stretch reads TLTDFRAFQT…DYERHRLRRA (231 aa). Residues 530 to 744 enclose the TSP C-terminal domain; it reads RAFQTVVLDP…LRYRCNDTIP (215 aa). Asn-740 carries an N-linked (GlcNAc...) asparagine glycan.

This sequence belongs to the thrombospondin family. In terms of assembly, pentamer; disulfide-linked. Exists in a more compact conformation in the presence of calcium and shows a more extended conformation in the absence of calcium. Interacts with ITGB3, ITGA5 and FN1. Binding to FN1 requires the presence of divalent cations (Ca(2+), Mg(2+) or Mn(2+)). The greatest amount of binding is seen in the presence of Mn(2+). Interacts with MATN1, MATN3, MATN4 and ACAN. Binds heparin, heparan sulfate and chondroitin sulfate. EDTA dimishes significantly its binding to ACAN and abolishes its binding to MATN3, MATN4 and chondroitin sulfate. Interacts with collagen I, II and IX, and interaction with these collagens is dependent on the presence of zinc ions. Interacts with ADAMTS12. Interacts with ITGA7. Ca(2+) serves as cofactor. Proteolytically cleaved by metalloproteases ADAMTS4 and ADAMTS1 with ADAMTS4 showing more potent activity.

Its subcellular location is the secreted. The protein resides in the extracellular space. It localises to the extracellular matrix. Plays a role in the structural integrity of cartilage via its interaction with other extracellular matrix proteins such as the collagens and fibronectin. Can mediate the interaction of chondrocytes with the cartilage extracellular matrix through interaction with cell surface integrin receptors. Could play a role in the pathogenesis of osteoarthritis. Potent suppressor of apoptosis in both primary chondrocytes and transformed cells. Suppresses apoptosis by blocking the activation of caspase-3 and by inducing the IAP family of survival proteins (BIRC3, BIRC2, BIRC5 and XIAP). Essential for maintaining a vascular smooth muscle cells (VSMCs) contractile/differentiated phenotype under physiological and pathological stimuli. Maintains this phenotype of VSMCs by interacting with ITGA7. This chain is Cartilage oligomeric matrix protein, found in Rattus norvegicus (Rat).